The sequence spans 296 residues: Phosphoribosylaminoimidazole-succinocarboxamide synthase (296 aa).

The protein belongs to the SAICAR synthetase family.

It catalyses the reaction 5-amino-1-(5-phospho-D-ribosyl)imidazole-4-carboxylate + L-aspartate + ATP = (2S)-2-[5-amino-1-(5-phospho-beta-D-ribosyl)imidazole-4-carboxamido]succinate + ADP + phosphate + 2 H(+). The protein operates within purine metabolism; IMP biosynthesis via de novo pathway; 5-amino-1-(5-phospho-D-ribosyl)imidazole-4-carboxamide from 5-amino-1-(5-phospho-D-ribosyl)imidazole-4-carboxylate: step 1/2. This chain is Phosphoribosylaminoimidazole-succinocarboxamide synthase, found in Pelobacter propionicus (strain DSM 2379 / NBRC 103807 / OttBd1).